The following is a 1135-amino-acid chain: Topless-related protein 4 (1135 aa).

Residues leucine 4–phenylalanine 36 enclose the LisH domain. One can recognise a CTLH domain in the interval phenylalanine 34–lysine 92. Position 214 is a phosphoserine (serine 214). Positions leucine 281–serine 303 are disordered. A compositionally biased stretch (polar residues) spans proline 290–serine 303. 12 WD repeats span residues serine 355–serine 395, glutamate 417–asparagine 456, alanine 462–threonine 503, glycine 506–aspartate 547, alanine 550–threonine 593, leucine 597–serine 636, alanine 638–histidine 680, leucine 776–leucine 815, asparagine 843–threonine 881, alanine 884–lysine 924, glycine 927–serine 966, and glutamate 1020–arginine 1059. The segment at aspartate 1095–arginine 1135 is disordered. The segment covering glycine 1119–arginine 1135 has biased composition (low complexity).

In terms of assembly, tetramer. Interacts with WUS (via the C-terminal domain). Interacts with SPL (via EAR motif). Interacts with SPEAR3/TIE1. Binds to and corepresses GAF1/IDD2 at the promoter of GA20OX2 gene.

The protein localises to the nucleus. In terms of biological role, transcription corepressor of Zinc finger transcription factors GAF1/IDD2 and ENY/IDD1 in regulation of gibberellin homeostasis and signaling. The sequence is that of Topless-related protein 4 (TPR4) from Arabidopsis thaliana (Mouse-ear cress).